Here is a 425-residue protein sequence, read N- to C-terminus: Aspartic protease 2 (425 aa).

The N-terminal stretch at Met1–Ala16 is a signal peptide. The region spanning Tyr72–Ala421 is the Peptidase A1 domain. Residue Asp90 is part of the active site. Residues Cys103 and Cys145 are joined by a disulfide bond. Residues Asn163, Asn197, and Asn304 are each glycosylated (N-linked (GlcNAc...) asparagine). Residue Asp316 is part of the active site. A disulfide bridge connects residues Cys351 and Cys382. Residues Asn354 and Asn365 are each glycosylated (N-linked (GlcNAc...) asparagine).

The protein belongs to the peptidase A1 family. Post-translationally, cleaved into a mature form. As to expression, expressed in intestine, amphidal glands and excretory gland (at protein level).

The protein resides in the secreted. Its activity is regulated as follows. Inhibited by pepstatin A. In terms of biological role, aspartic protease which cleaves several human serum proteins including hemoglobin, fibrinogen and albumin. Appears to cleave preferentially between P1 (Ala, Leu, Val, Phe and Gly) and P1' (Ala and Leu) residues. This is Aspartic protease 2 from Necator americanus (Human hookworm).